The following is a 93-amino-acid chain: Small ribosomal subunit protein uS19 (93 aa).

This sequence belongs to the universal ribosomal protein uS19 family.

Its function is as follows. Protein S19 forms a complex with S13 that binds strongly to the 16S ribosomal RNA. This is Small ribosomal subunit protein uS19 from Ehrlichia canis (strain Jake).